A 504-amino-acid chain; its full sequence is MSTAMPGAFSPPRGLADLPLCPVYSRLGRPFHQPVAATSLPEPRMVHFNAALAGELGFGPEAGPQLLEILAGNRPWPGYASSASVYAGHQFGAWVPQLGDGRALLIAEVRTPARERVELQLKGAGPTPYSRGLDGRAVLRSSIREYLASEAMHALGVPTTRCLSLVASPQPVARETVESAAVVCRAAASFVRFGQFEYFAGRGQTEPMARLADHVIAEHFPHLQGHPERHAAWLGEVIERTARLIAQWQLLGFCHGVMNTDNFSVLGLTLDYGPFGFMDRFRWYHVCNHSDYEGRYAYRAQPEVGRWNCERLLQAVSPLLADAPGRAAEIGQDLLRRYASVYHRAVMRGWADKLGLREVRETDAGLIDEFLGLLQRGRGDFTRSFRLLGRIRTDSDAPARGVREAFADINAFDAWVADYRTRLRSEQNVDDEARAGRMNRVNPKYVLRNHLAQIAIDKAMLGDYSEVARLAELLRRPYDEQPDMEAYAAEPPDYMRNIEVSCSS.

8 residues coordinate ATP: Gly-99, Gly-101, Arg-102, Lys-122, Asp-134, Gly-135, Arg-185, and Arg-192. Asp-261 acts as the Proton acceptor in catalysis. Positions 262 and 271 each coordinate Mg(2+). An ATP-binding site is contributed by Asp-271.

The protein belongs to the SELO family. Requires Mg(2+) as cofactor. The cofactor is Mn(2+).

It carries out the reaction L-seryl-[protein] + ATP = 3-O-(5'-adenylyl)-L-seryl-[protein] + diphosphate. The enzyme catalyses L-threonyl-[protein] + ATP = 3-O-(5'-adenylyl)-L-threonyl-[protein] + diphosphate. It catalyses the reaction L-tyrosyl-[protein] + ATP = O-(5'-adenylyl)-L-tyrosyl-[protein] + diphosphate. The catalysed reaction is L-histidyl-[protein] + UTP = N(tele)-(5'-uridylyl)-L-histidyl-[protein] + diphosphate. It carries out the reaction L-seryl-[protein] + UTP = O-(5'-uridylyl)-L-seryl-[protein] + diphosphate. The enzyme catalyses L-tyrosyl-[protein] + UTP = O-(5'-uridylyl)-L-tyrosyl-[protein] + diphosphate. Functionally, nucleotidyltransferase involved in the post-translational modification of proteins. It can catalyze the addition of adenosine monophosphate (AMP) or uridine monophosphate (UMP) to a protein, resulting in modifications known as AMPylation and UMPylation. The protein is Protein nucleotidyltransferase YdiU of Methylococcus capsulatus (strain ATCC 33009 / NCIMB 11132 / Bath).